Consider the following 227-residue polypeptide: Enolase-phosphatase E1 (227 aa).

Belongs to the HAD-like hydrolase superfamily. MasA/MtnC family. Monomer. It depends on Mg(2+) as a cofactor.

The enzyme catalyses 5-methylsulfanyl-2,3-dioxopentyl phosphate + H2O = 1,2-dihydroxy-5-(methylsulfanyl)pent-1-en-3-one + phosphate. It participates in amino-acid biosynthesis; L-methionine biosynthesis via salvage pathway; L-methionine from S-methyl-5-thio-alpha-D-ribose 1-phosphate: step 3/6. It functions in the pathway amino-acid biosynthesis; L-methionine biosynthesis via salvage pathway; L-methionine from S-methyl-5-thio-alpha-D-ribose 1-phosphate: step 4/6. Functionally, bifunctional enzyme that catalyzes the enolization of 2,3-diketo-5-methylthiopentyl-1-phosphate (DK-MTP-1-P) into the intermediate 2-hydroxy-3-keto-5-methylthiopentenyl-1-phosphate (HK-MTPenyl-1-P), which is then dephosphorylated to form the acireductone 1,2-dihydroxy-3-keto-5-methylthiopentene (DHK-MTPene). In Pseudomonas savastanoi pv. phaseolicola (strain 1448A / Race 6) (Pseudomonas syringae pv. phaseolicola (strain 1448A / Race 6)), this protein is Enolase-phosphatase E1.